The chain runs to 282 residues: Protein FRG2-like-2 (282 aa).

A compositionally biased stretch (basic and acidic residues) spans 1 to 10 (MGKGNEDPDL). Disordered stretches follow at residues 1–96 (MGKG…QENC) and 249–282 (GPGDSALDREAHPFPGQEITEPVSGSDEAKLGAP). 3 stretches are compositionally biased toward polar residues: residues 13-31 (SSIQCSTDQPPFQQISFTE), 58-68 (RQAGSDPNPNK), and 79-94 (GNSTAGSEPESSSYQE).

Belongs to the FRG2 family.

It is found in the nucleus. The polypeptide is Protein FRG2-like-2 (FRG2C) (Homo sapiens (Human)).